The primary structure comprises 932 residues: 2-oxoglutarate dehydrogenase E1 component (932 aa).

Belongs to the alpha-ketoglutarate dehydrogenase family. Homodimer. Part of the 2-oxoglutarate dehydrogenase (OGDH) complex composed of E1 (2-oxoglutarate dehydrogenase), E2 (dihydrolipoamide succinyltransferase) and E3 (dihydrolipoamide dehydrogenase); the complex contains multiple copies of the three enzymatic components (E1, E2 and E3). It depends on thiamine diphosphate as a cofactor.

The enzyme catalyses N(6)-[(R)-lipoyl]-L-lysyl-[protein] + 2-oxoglutarate + H(+) = N(6)-[(R)-S(8)-succinyldihydrolipoyl]-L-lysyl-[protein] + CO2. E1 component of the 2-oxoglutarate dehydrogenase (OGDH) complex which catalyzes the decarboxylation of 2-oxoglutarate, the first step in the conversion of 2-oxoglutarate to succinyl-CoA and CO(2). The chain is 2-oxoglutarate dehydrogenase E1 component from Staphylococcus aureus (strain JH9).